The sequence spans 361 residues: Phospho-N-acetylmuramoyl-pentapeptide-transferase (361 aa).

Transmembrane regions (helical) follow at residues 27–47 (ILAS…MIRW), 70–90 (GTPT…CLLW), 97–117 (SLWL…VDDY), 134–154 (YFWQ…NASL), 167–187 (TVTW…IVGS), 199–219 (GLAI…AYAS), 236–256 (TGEL…FLWY), 263–283 (VFMG…VAVV), 288–308 (LVLL…ILQV), and 338–358 (KVIV…LATL).

This sequence belongs to the glycosyltransferase 4 family. MraY subfamily. The cofactor is Mg(2+).

It is found in the cell inner membrane. The enzyme catalyses UDP-N-acetyl-alpha-D-muramoyl-L-alanyl-gamma-D-glutamyl-meso-2,6-diaminopimeloyl-D-alanyl-D-alanine + di-trans,octa-cis-undecaprenyl phosphate = di-trans,octa-cis-undecaprenyl diphospho-N-acetyl-alpha-D-muramoyl-L-alanyl-D-glutamyl-meso-2,6-diaminopimeloyl-D-alanyl-D-alanine + UMP. It functions in the pathway cell wall biogenesis; peptidoglycan biosynthesis. Its function is as follows. Catalyzes the initial step of the lipid cycle reactions in the biosynthesis of the cell wall peptidoglycan: transfers peptidoglycan precursor phospho-MurNAc-pentapeptide from UDP-MurNAc-pentapeptide onto the lipid carrier undecaprenyl phosphate, yielding undecaprenyl-pyrophosphoryl-MurNAc-pentapeptide, known as lipid I. This chain is Phospho-N-acetylmuramoyl-pentapeptide-transferase, found in Legionella pneumophila (strain Lens).